Here is a 389-residue protein sequence, read N- to C-terminus: Flagellar P-ring protein (389 aa).

Positions 1-33 (MRPLVAARRRAAACCALAACMLALAFAPAAARA) are cleaved as a signal peptide.

This sequence belongs to the FlgI family. In terms of assembly, the basal body constitutes a major portion of the flagellar organelle and consists of four rings (L,P,S, and M) mounted on a central rod.

The protein localises to the periplasm. It localises to the bacterial flagellum basal body. Its function is as follows. Assembles around the rod to form the L-ring and probably protects the motor/basal body from shearing forces during rotation. The sequence is that of Flagellar P-ring protein from Burkholderia pseudomallei (strain K96243).